We begin with the raw amino-acid sequence, 328 residues long: Protein FAM76B (328 aa).

Residues Lys-143–Thr-232 are disordered. Residues Gly-148–Leu-159 are compositionally biased toward low complexity. Over residues Gln-165–Ile-183 the composition is skewed to basic residues. Positions Gly-185–Gln-201 are enriched in polar residues. Ser-188 is modified (phosphoserine). Residues Glu-203–Thr-213 are compositionally biased toward basic and acidic residues. The span at Ser-216–Thr-232 shows a compositional bias: polar residues. The stretch at Leu-237–Lys-316 forms a coiled coil.

It belongs to the FAM76 family. In terms of tissue distribution, highly expressed in hematopoietic and immune systems including in the thymus, spleen, kidney, and blood vessel.

Plays a role in hematopoiesis and immune system development, and participates in the inflammatory response. In Danio rerio (Zebrafish), this protein is Protein FAM76B (fam76b).